A 354-amino-acid polypeptide reads, in one-letter code: Guanine nucleotide-binding protein G(o) subunit alpha (354 aa).

The N-myristoyl glycine moiety is linked to residue glycine 2. Cysteine 3 carries the S-palmitoyl cysteine lipid modification. The G-alpha domain occupies 32 to 354; that stretch reads KDVKLLLLGA…ANNLRGCGLY (323 aa). Residues 35–48 are G1 motif; the sequence is KLLLLGAGESGKST. GTP contacts are provided by glutamate 43, lysine 46, serine 47, threonine 48, serine 152, leucine 176, arginine 177, threonine 178, and arginine 179. Serine 47 serves as a coordination point for Mg(2+). The segment at 174–182 is G2 motif; it reads DILRTRVKT. Position 182 (threonine 182) interacts with Mg(2+). Residues 197 to 206 are G3 motif; it reads FRLFDVGGQR. Residue glutamine 205 is modified to 5-glutamyl histamine. Residues 266–273 are G4 motif; the sequence is ILFLNKKD. Residues asparagine 270, aspartate 273, and cysteine 325 each contribute to the GTP site. Residues 324 to 329 form a G5 motif region; it reads TCATDT. Cysteine 351 carries the S-palmitoyl cysteine lipid modification.

It belongs to the G-alpha family. G(i/o/t/z) subfamily. As to quaternary structure, g proteins are composed of 3 units; alpha, beta and gamma. The alpha chain contains the guanine nucleotide binding site. Forms a complex with GNB1 and GNG3. Interacts with RGS14. Interacts with RGS16. Interacts with RGS19. Interacts (when palmitoylated) with ADGRG3. Post-translationally, histaminylated at Gln-205 residues by TGM2.

The protein localises to the cell membrane. The protein resides in the membrane. It catalyses the reaction GTP + H2O = GDP + phosphate + H(+). The GTPase activity is promoted by GTPAse activators, such as RGS14, RGS16 and RGS19. Guanine nucleotide-binding proteins (G proteins) function as transducers downstream of G protein-coupled receptors (GPCRs) in numerous signaling cascades. The alpha chain contains the guanine nucleotide binding site and alternates between an active, GTP-bound state and an inactive, GDP-bound state. Signaling by an activated GPCR promotes GDP release and GTP binding. The alpha subunit has a low GTPase activity that converts bound GTP to GDP, thereby terminating the signal. Both GDP release and GTP hydrolysis are modulated by numerous regulatory proteins. Signaling is mediated via effector proteins, such as adenylate cyclase. Inhibits adenylate cyclase activity, leading to decreased intracellular cAMP levels. The chain is Guanine nucleotide-binding protein G(o) subunit alpha (GNAO1) from Bos taurus (Bovine).